Consider the following 266-residue polypeptide: Probable septum site-determining protein MinC (266 aa).

Positions 98–146 are disordered; that stretch reads ILKGGRPVSDVDVPKVEPESPPAEEKKKTGKATKASGKSDEIGETDSPQ. Basic and acidic residues predominate over residues 109 to 124; it reads DVPKVEPESPPAEEKK.

Belongs to the MinC family. As to quaternary structure, interacts with MinD and FtsZ.

Functionally, cell division inhibitor that blocks the formation of polar Z ring septums. Rapidly oscillates between the poles of the cell to destabilize FtsZ filaments that have formed before they mature into polar Z rings. Prevents FtsZ polymerization. This chain is Probable septum site-determining protein MinC, found in Allorhizobium ampelinum (strain ATCC BAA-846 / DSM 112012 / S4) (Agrobacterium vitis (strain S4)).